The primary structure comprises 456 residues: UDP-N-acetylmuramate--L-alanine ligase (456 aa).

ATP is bound at residue 118 to 124 (GTHGKST).

The protein belongs to the MurCDEF family.

Its subcellular location is the cytoplasm. The enzyme catalyses UDP-N-acetyl-alpha-D-muramate + L-alanine + ATP = UDP-N-acetyl-alpha-D-muramoyl-L-alanine + ADP + phosphate + H(+). It functions in the pathway cell wall biogenesis; peptidoglycan biosynthesis. In terms of biological role, cell wall formation. The chain is UDP-N-acetylmuramate--L-alanine ligase from Paenarthrobacter aurescens (strain TC1).